Consider the following 41-residue polypeptide: MKIRNSLKSAKVRDKNCRVVRRHGRVYVINKKNPRMKARQG.

This sequence belongs to the bacterial ribosomal protein bL36 family.

In Granulibacter bethesdensis (strain ATCC BAA-1260 / CGDNIH1), this protein is Large ribosomal subunit protein bL36.